We begin with the raw amino-acid sequence, 245 residues long: tRNA pseudouridine synthase A (245 aa).

The Nucleophile role is filled by Asp-52. Tyr-111 is a substrate binding site.

It belongs to the tRNA pseudouridine synthase TruA family. As to quaternary structure, homodimer.

The catalysed reaction is uridine(38/39/40) in tRNA = pseudouridine(38/39/40) in tRNA. Functionally, formation of pseudouridine at positions 38, 39 and 40 in the anticodon stem and loop of transfer RNAs. The chain is tRNA pseudouridine synthase A from Rickettsia felis (strain ATCC VR-1525 / URRWXCal2) (Rickettsia azadi).